The sequence spans 277 residues: 3-methyl-2-oxobutanoate hydroxymethyltransferase (277 aa).

Residues D43 and D82 each coordinate Mg(2+). 3-methyl-2-oxobutanoate contacts are provided by residues 43 to 44 (DS), D82, and K112. Mg(2+) is bound at residue E114. Residue E181 is the Proton acceptor of the active site.

This sequence belongs to the PanB family. In terms of assembly, homodecamer; pentamer of dimers. It depends on Mg(2+) as a cofactor.

It localises to the cytoplasm. It carries out the reaction 3-methyl-2-oxobutanoate + (6R)-5,10-methylene-5,6,7,8-tetrahydrofolate + H2O = 2-dehydropantoate + (6S)-5,6,7,8-tetrahydrofolate. The protein operates within cofactor biosynthesis; (R)-pantothenate biosynthesis; (R)-pantoate from 3-methyl-2-oxobutanoate: step 1/2. Functionally, catalyzes the reversible reaction in which hydroxymethyl group from 5,10-methylenetetrahydrofolate is transferred onto alpha-ketoisovalerate to form ketopantoate. The sequence is that of 3-methyl-2-oxobutanoate hydroxymethyltransferase from Listeria innocua serovar 6a (strain ATCC BAA-680 / CLIP 11262).